The chain runs to 195 residues: MKQFIDFIPLVLFFIVYKIDPQNVEFAGFNLSGIYGATATLILASVIVYGALWLKHRHLEKSQWFTLGACLVLGGLTLAFHEDTFLKWKAPLVNWLFALAFAGSHFIGDKPMIQRIMGHAIQLPQGLWVRLNIAWVVFFLVCGFANLYVVFTYPNFWVDFKVFGSLGMTLLFLIGQGIFLARHLHDADTGEKPKD.

5 consecutive transmembrane segments (helical) span residues 34–54, 65–85, 88–108, 131–151, and 160–180; these read IYGA…ALWL, FTLG…EDTF, WKAP…HFIG, LNIA…YVVF, and FKVF…GIFL.

Belongs to the YciB family.

Its subcellular location is the cell inner membrane. Functionally, plays a role in cell envelope biogenesis, maintenance of cell envelope integrity and membrane homeostasis. The polypeptide is Inner membrane-spanning protein YciB (Pseudomonas paraeruginosa (strain DSM 24068 / PA7) (Pseudomonas aeruginosa (strain PA7))).